The following is a 138-amino-acid chain: Large ribosomal subunit protein eL14A (138 aa).

An N-acetylserine modification is found at S2.

Belongs to the eukaryotic ribosomal protein eL14 family. Component of the large ribosomal subunit (LSU). Mature yeast ribosomes consist of a small (40S) and a large (60S) subunit. The 40S small subunit contains 1 molecule of ribosomal RNA (18S rRNA) and 33 different proteins (encoded by 57 genes). The large 60S subunit contains 3 rRNA molecules (25S, 5.8S and 5S rRNA) and 46 different proteins (encoded by 81 genes). Post-translationally, N-terminally acetylated by acetyltransferase NatA.

The protein localises to the cytoplasm. Functionally, component of the ribosome, a large ribonucleoprotein complex responsible for the synthesis of proteins in the cell. The small ribosomal subunit (SSU) binds messenger RNAs (mRNAs) and translates the encoded message by selecting cognate aminoacyl-transfer RNA (tRNA) molecules. The large subunit (LSU) contains the ribosomal catalytic site termed the peptidyl transferase center (PTC), which catalyzes the formation of peptide bonds, thereby polymerizing the amino acids delivered by tRNAs into a polypeptide chain. The nascent polypeptides leave the ribosome through a tunnel in the LSU and interact with protein factors that function in enzymatic processing, targeting, and the membrane insertion of nascent chains at the exit of the ribosomal tunnel. The protein is Large ribosomal subunit protein eL14A of Saccharomyces cerevisiae (strain ATCC 204508 / S288c) (Baker's yeast).